The sequence spans 277 residues: Diaminopimelate epimerase (277 aa).

Positions 13, 46, and 66 each coordinate substrate. Cys75 serves as the catalytic Proton donor. Substrate is bound by residues 76 to 77 (GN), Asn160, Asn193, and 211 to 212 (ER). Catalysis depends on Cys220, which acts as the Proton acceptor. 221 to 222 (GS) contributes to the substrate binding site.

The protein belongs to the diaminopimelate epimerase family. In terms of assembly, homodimer.

The protein resides in the cytoplasm. The catalysed reaction is (2S,6S)-2,6-diaminopimelate = meso-2,6-diaminopimelate. The protein operates within amino-acid biosynthesis; L-lysine biosynthesis via DAP pathway; DL-2,6-diaminopimelate from LL-2,6-diaminopimelate: step 1/1. Its function is as follows. Catalyzes the stereoinversion of LL-2,6-diaminopimelate (L,L-DAP) to meso-diaminopimelate (meso-DAP), a precursor of L-lysine and an essential component of the bacterial peptidoglycan. The polypeptide is Diaminopimelate epimerase (Legionella pneumophila subsp. pneumophila (strain Philadelphia 1 / ATCC 33152 / DSM 7513)).